A 1159-amino-acid chain; its full sequence is RAD51-associated protein 2 (1159 aa).

Residues 1-35 (MSLPQPTPRMAELRKPTSSLTPPEDPDSQPPSSKR) form a disordered region. The interval 1111–1159 (SHFPHGISRVRPLKTCSRPIRIGLSRKARIKQLHPYLKQMCYGNLKENF) is interaction with RAD51.

In terms of assembly, interacts with RAD51. In terms of tissue distribution, specifically expressed in meiotic tissues. Highly expressed in testis.

This chain is RAD51-associated protein 2 (RAD51AP2), found in Homo sapiens (Human).